A 915-amino-acid polypeptide reads, in one-letter code: MVQLGKLLRVLTLMKFPCCVLEVLLCVLAAAARGQEMYAPHSIRIEGDVTLGGLFPVHAKGPSGVPCGDIKRENGIHRLEAMLYALDQINSDPNLLPNVTLGARILDTCSRDTYALEQSLTFVQALIQKDTSDVRCTNGEPPVFVKPEKVVGVIGASGSSVSIMVANILRLFQIPQISYASTAPELSDDRRYDFFSRVVPPDSFQAQAMVDIVKALGWNYVSTLASEGSYGEKGVESFTQISKEAGGLCIAQSVRIPQERKDRTIDFDRIIKQLLDTPNSRAVVIFANDEDIKQILAAAKRADQVGHFLWVGSDSWGSKINPLHQHEDIAEGAITIQPKRATVEGFDAYFTSRTLENNRRNVWFAEYWEENFNCKLTISGSKKEDTDRKCTGQERIGKDSNYEQEGKVQFVIDAVYAMAHALHHMNKDLCADYRGVCPEMEQAGGKKLLKYIRNVNFNGSAGTPVMFNKNGDAPGRYDIFQYQTTNTTNPGYRLIGQWTDELQLNIEDMQWGKGVREIPPSVCTLPCKPGQRKKTQKGTPCCWTCEPCDGYQYQFDEMTCQHCPYDQRPNENRTGCQNIPIIKLEWHSPWAVIPVFLAMLGIIATIFVMATFIRYNDTPIVRASGRELSYVLLTGIFLCYIITFLMIAKPDVAVCSFRRVFLGLGMCISYAALLTKTNRIYRIFEQGKKSVTAPRLISPTSQLAITSSLISVQLLGVFIWFGVDPPNIIIDYDEHKTMNPEQARGVLKCDITDLQIICSLGYSILLMVTCTVYAIKTRGVPENFNEAKPIGFTMYTTCIVWLAFIPIFFGTAQSAEKLYIQTTTLTISMNLSASVALGMLYMPKVYIIIFHPELNVQKRKRSFKAVVTAATMSSRLSHKPSDRPNGEAKTELCENVDPNSPAAKKKYVSYNNLVI.

A signal peptide spans 1 to 34; sequence MVQLGKLLRVLTLMKFPCCVLEVLLCVLAAAARG. Residues 35-590 are Extracellular-facing; sequence QEMYAPHSIR…IIKLEWHSPW (556 aa). The cysteines at positions 67 and 109 are disulfide-linked. Asparagine 98 carries N-linked (GlcNAc...) asparagine glycosylation. L-glutamate is bound by residues serine 159, 180-182, tyrosine 230, and aspartate 314; that span reads AST. Disulfide bonds link cysteine 249-cysteine 541, cysteine 374-cysteine 390, cysteine 430-cysteine 437, cysteine 523-cysteine 542, cysteine 527-cysteine 545, cysteine 548-cysteine 560, and cysteine 563-cysteine 576. Lysine 407 contacts L-glutamate. 2 N-linked (GlcNAc...) asparagine glycosylation sites follow: asparagine 458 and asparagine 486. N-linked (GlcNAc...) asparagine glycosylation is present at asparagine 572. The chain crosses the membrane as a helical span at residues 591-615; the sequence is AVIPVFLAMLGIIATIFVMATFIRY. The Cytoplasmic portion of the chain corresponds to 616–627; sequence NDTPIVRASGRE. The helical transmembrane segment at 628–648 threads the bilayer; it reads LSYVLLTGIFLCYIITFLMIA. Residues 649–654 are Extracellular-facing; that stretch reads KPDVAV. A helical transmembrane segment spans residues 655-675; sequence CSFRRVFLGLGMCISYAALLT. Residues 676-702 are Cytoplasmic-facing; sequence KTNRIYRIFEQGKKSVTAPRLISPTSQ. A helical transmembrane segment spans residues 703–723; sequence LAITSSLISVQLLGVFIWFGV. At 724–753 the chain is on the extracellular side; that stretch reads DPPNIIIDYDEHKTMNPEQARGVLKCDITD. A helical transmembrane segment spans residues 754–775; that stretch reads LQIICSLGYSILLMVTCTVYAI. Residues 776 to 788 lie on the Cytoplasmic side of the membrane; it reads KTRGVPENFNEAK. Residues 789 to 810 form a helical membrane-spanning segment; it reads PIGFTMYTTCIVWLAFIPIFFG. At 811 to 825 the chain is on the extracellular side; it reads TAQSAEKLYIQTTTL. Residues 826 to 850 form a helical membrane-spanning segment; that stretch reads TISMNLSASVALGMLYMPKVYIIIF. At 851–915 the chain is on the cytoplasmic side; that stretch reads HPELNVQKRK…KYVSYNNLVI (65 aa). Residues 874–895 are disordered; that stretch reads SRLSHKPSDRPNGEAKTELCEN. Over residues 879–892 the composition is skewed to basic and acidic residues; the sequence is KPSDRPNGEAKTEL. Residue serine 900 is modified to Phosphoserine.

The protein belongs to the G-protein coupled receptor 3 family. As to quaternary structure, homodimer. Interacts with PICK1.

The protein localises to the cell membrane. G-protein coupled receptor activated by glutamate that regulates axon outgrowth through the MAPK-cAMP-PKA signaling pathway during neuronal development. Ligand binding causes a conformation change that triggers signaling via guanine nucleotide-binding proteins (G proteins) and modulates the activity of downstream effectors, such as adenylate cyclase that it inhibits. This chain is Metabotropic glutamate receptor 7 (Grm7), found in Mus musculus (Mouse).